Consider the following 908-residue polypeptide: Glutamate receptor ionotropic, kainate 2 (908 aa).

The first 31 residues, 1 to 31 (MKIIFPILSNPVFRRTVKLLLCLLWIGYSQG), serve as a signal peptide directing secretion. Residues 32 to 561 (TTHVLRFGGI…VFSFLNPLSP (530 aa)) are Extracellular-facing. N-linked (GlcNAc...) asparagine glycosylation is found at Asn-67, Asn-73, Asn-275, Asn-378, Asn-412, Asn-423, and Asn-430. A disulfide bond links Cys-96 and Cys-347. Positions 516, 518, and 523 each coordinate L-glutamate. N-linked (GlcNAc...) asparagine glycosylation is present at Asn-546. Residues 562–582 (DIWMYVLLACLGVSCVLFVIA) form a helical membrane-spanning segment. Residues 583–638 (RFSPYEWYNPHPCNPDSDVVENNFTLLNSFWFGVGALMRQGSELMPKALSTRIVGG) are Cytoplasmic-facing. Residues 639 to 659 (IWWFFTLIIISSYTANLAAFL) traverse the membrane as a helical segment. The Extracellular segment spans residues 660–819 (TVERMESPID…KEASALGVQN (160 aa)). Ala-689, Thr-690, and Glu-738 together coordinate L-glutamate. A disulfide bond links Cys-750 and Cys-804. A glycan (N-linked (GlcNAc...) asparagine) is linked at Asn-751. The helical transmembrane segment at 820–840 (IGGIFIVLAAGLVLSVFVAVG) threads the bilayer. Residues 841–908 (EFLYKSKKNA…RRLPGKETMA (68 aa)) lie on the Cytoplasmic side of the membrane. 2 positions are modified to phosphoserine; by PKC: Ser-846 and Ser-868. Lys-886 is covalently cross-linked (Glycyl lysine isopeptide (Lys-Gly) (interchain with G-Cter in SUMO1)).

It belongs to the glutamate-gated ion channel (TC 1.A.10.1) family. GRIK2 subfamily. In terms of assembly, homotetramer and heterotetramer with GRIK5. Tetramers may be formed by the dimerization of dimers. Assembles into a kainate-gated homomeric channel that does not bind AMPA. Can form functional heteromeric receptors with GRIK3, GRIK4 and GRIK5. Interacts with NETO2. Interacts with DLG4. Interacts with NETO2. Interacts (via C-terminus) with KLHL17 (via kelch repeats); the interaction targets GRIK2 for degradation via ubiquitin-proteasome pathway. In terms of processing, sumoylation mediates kainate receptor-mediated endocytosis and regulates synaptic transmission. Sumoylation is enhanced by PIAS3 and desumoylated by SENP1. Ubiquitinated. Ubiquitination regulates the GRIK2 levels at the synapse by leading kainate receptor degradation through proteasome. Post-translationally, phosphorylated by PKC at Ser-868 upon agonist activation, this directly enhance sumoylation.

The protein localises to the cell membrane. Its subcellular location is the postsynaptic cell membrane. The enzyme catalyses Ca(2+)(in) = Ca(2+)(out). The catalysed reaction is Na(+)(in) = Na(+)(out). Its activity is regulated as follows. Cold receptor activity activated by temperatures between 10-19 degrees Celsius. In terms of biological role, ionotropic glutamate receptor that functions as a cation-permeable ligand-gated ion channel, gated by L-glutamate and the glutamatergic agonist kainic acid. L-glutamate acts as an excitatory neurotransmitter at many synapses in the central nervous system. Binding of the excitatory neurotransmitter L-glutamate induces a conformation change, leading to the opening of the cation channel, and thereby converts the chemical signal to an electrical impulse. The receptor then desensitizes rapidly and enters a transient inactive state, characterized by the presence of bound agonist. Modulates cell surface expression of NETO2. In association with GRIK3, involved in presynaptic facilitation of glutamate release at hippocampal mossy fiber synapses. Independent of its ionotropic glutamate receptor activity, acts as a thermoreceptor conferring sensitivity to cold temperatures. Functions in dorsal root ganglion neurons. The sequence is that of Glutamate receptor ionotropic, kainate 2 (GRIK2) from Macaca fascicularis (Crab-eating macaque).